Consider the following 1394-residue polypeptide: MDNEEENHYVSRLRDVYSSCDTTGTGFLDQEELTQLCTKLGLEEQLPALLHILLGDDRLARVNFEEFKEGFVAVLSSGSGVEPSDEEGSSSESATSCAVPPKYMSGSKWYGRRSLPELGDSATATKYGSEQQAKGSVKPPLRRSASLESVESLKSDEDAESAKEPQNELFEAQGQLRSWGCEVFGTLRKSCSPSFSTPENLVQGIWHELGIGSSGHLNEQELAVVCRSIGLHSLEKQELEELFSKLDQDGDGRVSLAEFQLGLFGHEPPSLPASSSLIKPNRLWSHYQEESGCHTTTTSSLVSVCSGLRLFSSVDDGSGFAFPEQVISAWAQEGIQNGREILQSLDFSVDEKVNLLELTWALDNELLTVDGVIQQAALACYRQELSYHQGQVDQLVQERDKARQDLEKAEKRNLDFVREMDDCHSALEQLTEKKIKHLEQEYRGRLSLLRSEVEMERELFWEQARRQRAVLEQDVGRLQAEETSLREKLTLALKENSRLQKEIIEVVEKLSDSEKLVLRLQSDLQFVLKDKLEPQSMELLAQEEQFTAILNDYELKCRDLQDRNDELQAELEGLRLRLPRSRQSPAGTPGTHRRRIPGRGPADNLFVGESTPVSLETEIMVEQMKEHYQELRMQLETKVNYYEKEIEVMKRNFEKDKKEMEQAFQLEVSVLEGQKADLEALYAKSQEVILGLKEQLQDAAQSPEPAPAGLAHCCAQALCTLAQRLEVEMHLRHQDQLLQIRQEAEEELNQKLSWLEAQHAACCESLSLQHQCEKDQLLQTHLQRVKDLAAQLDLEKGRREEREQEVLAHCRRQQLKLQAVMSEEQARICRSFTLEKEKLEQTYREQVEGLVQEADVLRALLKNGTTVVSDQQERTPSSMSLGPDSRQQPTARQAVSPDGRTGAPAEWPGPEKAEGRDFPGQLCSIDAMPSPTPTLLSRRSSENLGVRDNHQRPLNAEEGAIPKEPEPSARTLTGQGQKLPLPVHPQMLEPSLGTTALDRKAASVGVQGQASEGPVGDGEGVQEAWLQFRGEATRMRPSLPCSELPNPQEATVMPAMSESEMKDVKIKLLQLEDVVRALEKADSRESYRAELQRLSEENLVLKSDLGKIQLELETSESKNEVQRQEIEVLKRDKEQACCDLEELSTQTQKYKDEMSQLNCRVLQLEGEPSGLHTQKEENHGAIQVLMKKLEEAGCREEQQGDQIQNLKIELERVNEECQYLRLSQAELTESLEESRSQLYSVQLRLEAAQSQHGRIVQRLQEQMSQLVPGARVAELQHLLNVKEEEARRLSAQQEEYRQQLKAREDQVEDAEARLRNVEWLLQEKVEELRKQFEKNTRSDLLLKELYVENAHLMKAVQLTEEKQRGAEKKNCVLEEKVRALNKLISKMAPASLSV.

2 consecutive EF-hand domains span residues 8 to 43 (HYVSRLRDVYSSCDTTGTGFLDQEELTQLCTKLGLE) and 42 to 77 (LEEQLPALLHILLGDDRLARVNFEEFKEGFVAVLSS). Disordered regions lie at residues 77-99 (SGSGVEPSDEEGSSSESATSCAV) and 126-166 (KYGS…KEPQ). Residue Ser-149 is modified to Phosphoserine. Residues 151-166 (ESLKSDEDAESAKEPQ) show a composition bias toward basic and acidic residues. EF-hand domains are found at residues 197–232 (TPENLVQGIWHELGIGSSGHLNEQELAVVCRSIGLH) and 234–269 (LEKQELEELFSKLDQDGDGRVSLAEFQLGLFGHEPP). Residues Asp-247, Asp-249, Asp-251, Arg-253, and Glu-258 each contribute to the Ca(2+) site. Coiled coils occupy residues 382–423 (RQEL…MDDC), 461–515 (WEQA…DSEK), and 544–584 (EQFT…SRQS). A KEN box motif is present at residues 494 to 496 (KEN). The tract at residues 578 to 602 (LPRSRQSPAGTPGTHRRRIPGRGPA) is disordered. The D-box signature appears at 632-640 (RMQLETKVN). The stretch at 835–863 (EKEKLEQTYREQVEGLVQEADVLRALLKN) forms a coiled coil. Polar residues predominate over residues 866-893 (TVVSDQQERTPSSMSLGPDSRQQPTARQ). A disordered region spans residues 866-977 (TVVSDQQERT…SARTLTGQGQ (112 aa)). Basic and acidic residues predominate over residues 939–951 (RSSENLGVRDNHQ). Coiled-coil stretches lie at residues 1057–1229 (SESE…ELTE) and 1269–1331 (GARV…LRKQ).

Interacts with gamma-tubulin and TUBGCP4. Interacts with anaphase promoting complex/cyclosome (APC/C). Interacts with CDC20 and FZR1. Interacts with LCA5 and USH2A. Post-translationally, phosphorylated by PLK1 which disrupts its centrosome association and interaction with gamma-tubulin. Ubiquitinated by the APC/C complex leading to its degradation.

It localises to the cytoplasm. It is found in the cytoskeleton. Its subcellular location is the microtubule organizing center. The protein localises to the centrosome. Involved in the microtubule organization in interphase cells. Overexpression induces the fragmentation of the Golgi, and causes lysosomes to disperse toward the cell periphery; it also interferes with mitotic spindle assembly. Involved in vesicle transport in photoreceptor cells. This is Ninein-like protein (Ninl) from Mus musculus (Mouse).